A 634-amino-acid chain; its full sequence is Pentatricopeptide repeat-containing protein At5g14080 (634 aa).

PPR repeat units follow at residues 81-115 (DSIS…KILL), 116-150 (DSSV…GQEI), 151-185 (HPDV…GVSL), 186-220 (NTLG…NLNI), 222-256 (GSII…DCKP), 257-291 (DFMA…GVAP), 292-326 (RSSD…KFPM), 327-360 (DNDI…GKLP), 361-395 (AIRT…GYFS), 396-430 (ELQS…GLAP), 431-465 (DVSL…GCKM), 466-500 (NLTT…GIEP), and 501-535 (DETI…DHKT).

This sequence belongs to the PPR family. P subfamily.

This is Pentatricopeptide repeat-containing protein At5g14080 from Arabidopsis thaliana (Mouse-ear cress).